The following is a 549-amino-acid chain: Limonene dehydrogenase subunit B (549 aa).

It belongs to the carotenoid/retinoid oxidoreductase family. Heterodimer composed of CtmA and CtmB. Requires FAD as cofactor.

The protein resides in the cytoplasm. The enzyme catalyses (4S)-limonene + A + H2O = (4S)-perillyl alcohol + AH2. It carries out the reaction (4R)-limonene + A + H2O = (4R)-perillyl alcohol + AH2. It participates in terpene metabolism; monoterpene degradation. With respect to regulation, the presence of molecular oxygen causes a 40% reduction in specific activity. Functionally, involved in the degradation of the cyclic monoterpene limonene. Catalyzes the oxidation of limonene at the primary methyl group, forming perillyl alcohol. Hydroxylates the R- and S-enantiomers to their respective enantiomeric form of perillyl alcohol at a similar rate. Native CtmAB oxidizes a wide range of monocyclic monoterpenes containing the allylic methyl group motif (1-methyl-cyclohex-1-ene). Can also catalyze the reverse reaction, the reduction of perillyl alcohol to limonene, but with lower efficiency. Cannot use molecular oxygen as an electron acceptor. The natural electron acceptor is likely a heterodimeric electron transfer flavoprotein (ETF). The protein is Limonene dehydrogenase subunit B of Castellaniella defragrans (strain DSM 12143 / CCUG 39792 / 65Phen) (Alcaligenes defragrans).